The chain runs to 341 residues: Anthranilate phosphoribosyltransferase (341 aa).

5-phospho-alpha-D-ribose 1-diphosphate contacts are provided by residues Gly79, 82–83 (GD), Thr87, 89–92 (NIST), 107–115 (KHGNRAASS), and Ala119. Gly79 lines the anthranilate pocket. Ser91 is a binding site for Mg(2+). Asn110 serves as a coordination point for anthranilate. Arg165 contacts anthranilate. Residues Asp224 and Glu225 each coordinate Mg(2+).

It belongs to the anthranilate phosphoribosyltransferase family. Homodimer. Requires Mg(2+) as cofactor.

It carries out the reaction N-(5-phospho-beta-D-ribosyl)anthranilate + diphosphate = 5-phospho-alpha-D-ribose 1-diphosphate + anthranilate. The protein operates within amino-acid biosynthesis; L-tryptophan biosynthesis; L-tryptophan from chorismate: step 2/5. Functionally, catalyzes the transfer of the phosphoribosyl group of 5-phosphorylribose-1-pyrophosphate (PRPP) to anthranilate to yield N-(5'-phosphoribosyl)-anthranilate (PRA). The sequence is that of Anthranilate phosphoribosyltransferase from Lacticaseibacillus casei (strain BL23) (Lactobacillus casei).